A 404-amino-acid chain; its full sequence is Propionate kinase (404 aa).

Belongs to the acetokinase family. PduW subfamily.

Its subcellular location is the cytoplasm. The catalysed reaction is propanoate + ATP = propanoyl phosphate + ADP. The protein operates within polyol metabolism; 1,2-propanediol degradation. In terms of biological role, works with phosphate acetyltransferase (pta) to capture exogenous propionate and regenerate propionyl-CoA during degradation of 1,2-propanediol (1,2-PD). This is Propionate kinase from Citrobacter koseri (strain ATCC BAA-895 / CDC 4225-83 / SGSC4696).